A 147-amino-acid chain; its full sequence is Large ribosomal subunit protein uL13 (147 aa).

Belongs to the universal ribosomal protein uL13 family. In terms of assembly, part of the 50S ribosomal subunit.

Functionally, this protein is one of the early assembly proteins of the 50S ribosomal subunit, although it is not seen to bind rRNA by itself. It is important during the early stages of 50S assembly. The polypeptide is Large ribosomal subunit protein uL13 (Levilactobacillus brevis (strain ATCC 367 / BCRC 12310 / CIP 105137 / JCM 1170 / LMG 11437 / NCIMB 947 / NCTC 947) (Lactobacillus brevis)).